Consider the following 224-residue polypeptide: UPF0173 metal-dependent hydrolase TTHA1283 (224 aa).

This sequence belongs to the UPF0173 family.

This chain is UPF0173 metal-dependent hydrolase TTHA1283, found in Thermus thermophilus (strain ATCC 27634 / DSM 579 / HB8).